Here is a 218-residue protein sequence, read N- to C-terminus: Phosphatidylserine decarboxylase proenzyme (218 aa).

Residue Ser-187 is the Schiff-base intermediate with substrate; via pyruvic acid of the active site. Ser-187 is subject to Pyruvic acid (Ser); by autocatalysis.

It belongs to the phosphatidylserine decarboxylase family. PSD-A subfamily. As to quaternary structure, heterodimer of a large membrane-associated beta subunit and a small pyruvoyl-containing alpha subunit. The cofactor is pyruvate. Post-translationally, is synthesized initially as an inactive proenzyme. Formation of the active enzyme involves a self-maturation process in which the active site pyruvoyl group is generated from an internal serine residue via an autocatalytic post-translational modification. Two non-identical subunits are generated from the proenzyme in this reaction, and the pyruvate is formed at the N-terminus of the alpha chain, which is derived from the carboxyl end of the proenzyme. The post-translation cleavage follows an unusual pathway, termed non-hydrolytic serinolysis, in which the side chain hydroxyl group of the serine supplies its oxygen atom to form the C-terminus of the beta chain, while the remainder of the serine residue undergoes an oxidative deamination to produce ammonia and the pyruvoyl prosthetic group on the alpha chain.

The protein resides in the cell membrane. It carries out the reaction a 1,2-diacyl-sn-glycero-3-phospho-L-serine + H(+) = a 1,2-diacyl-sn-glycero-3-phosphoethanolamine + CO2. The protein operates within phospholipid metabolism; phosphatidylethanolamine biosynthesis; phosphatidylethanolamine from CDP-diacylglycerol: step 2/2. Functionally, catalyzes the formation of phosphatidylethanolamine (PtdEtn) from phosphatidylserine (PtdSer). The polypeptide is Phosphatidylserine decarboxylase proenzyme (Geobacter sulfurreducens (strain ATCC 51573 / DSM 12127 / PCA)).